Here is a 553-residue protein sequence, read N- to C-terminus: Solute carrier family 22 member 12 (553 aa).

Residues 10 to 30 (VGGLGRFQLFQTVALVTPILW) form a helical membrane-spanning segment. An N-linked (GlcNAc...) asparagine glycan is attached at Asn56. The next 11 membrane-spanning stretches (helical) occupy residues 146–166 (PMAQSIFLAGILVGAAVCGHA), 182–202 (LVSVSGTAAAFMPTFPLYCLF), 204–224 (FLLASAVAGVMMNTASLLMEW), 232–252 (LVMTLNALGFSFGQVLTGSVA), 260–280 (MLQLAVSAPFFLFFVYSWWLP), 351–371 (IISMLCWFAFGFTFYGLALDL), 378–398 (IFLLQALIGIVDFPVKTGSLL), 412–432 (FLVLPGLCILSNILVPHGMGV), 435–455 (SALAVLGLGCLGGAFTCITIF), 466–486 (MTAVGLCQVAARGGAMLGPLV), and 495–515 (WMPLLVYGVVPVLSGLAALLL). The residue at position 534 (Ser534) is a Phosphoserine. A Phosphothreonine modification is found at Thr542.

The protein belongs to the major facilitator (TC 2.A.1) superfamily. Organic cation transporter (TC 2.A.1.19) family. In terms of assembly, interacts with PDZK1. Post-translationally, N-glycosylated. As to expression, detected in kidney (at protein level). Detected in kidney cortex, in proximal tubules.

It is found in the apical cell membrane. It carries out the reaction urate(out) + (S)-lactate(in) = urate(in) + (S)-lactate(out). The catalysed reaction is nicotinate(in) + urate(out) = nicotinate(out) + urate(in). The enzyme catalyses urate(out) + n chloride(in) = urate(in) + n chloride(out). It catalyses the reaction orotate(out) + nicotinate(in) = orotate(in) + nicotinate(out). Its function is as follows. Electroneutral antiporter that translocates urate across the apical membrane of proximal tubular cells in exchange for monovalent organic or inorganic anions. Involved in renal reabsorption of urate and helps maintaining blood levels of uric acid. Mediates urate uptake by an exchange with organic anions such as (S)-lactate and nicotinate, and inorganic anion Cl(-). Other inorganic anions such as Br(-), I(-) and NO3(-) may also act as counteranions that exchange for urate. Also mediates orotate tubular uptake coupled with nicotinate efflux and to a lesser extent with lactate efflux, therefore displaying a potential role in orotate renal reabsorption. Orotate transport is Cl(-)-dependent. In Mus musculus (Mouse), this protein is Solute carrier family 22 member 12.